Reading from the N-terminus, the 286-residue chain is Translocon-associated protein subunit alpha (286 aa).

A signal peptide spans 1 to 21; sequence MRLLPRLLLLFLLAFPAAVLL. The Lumenal segment spans residues 22–207; sequence RGGPGGSLAL…EREDGLDGET (186 aa). Residues 46 to 75 are compositionally biased toward acidic residues; the sequence is IIEDEDDEAEVEEDEPTDLAEDKEEEDVSS. Residues 46–83 form a disordered region; sequence IIEDEDDEAEVEEDEPTDLAEDKEEEDVSSEPEASPSA. 2 N-linked (GlcNAc...) asparagine glycosylation sites follow: Asn-136 and Asn-191. Residues 208-228 form a helical membrane-spanning segment; the sequence is IFMYMFLAGLGLLVVVGLHQL. The Cytoplasmic portion of the chain corresponds to 229–286; that stretch reads LESRKRKRPIQKVEMGTSSQNDVDMSWIPQETLNQINKASPRRQPRKRAQKRSVGSDE. Positions 236-286 are disordered; it reads RPIQKVEMGTSSQNDVDMSWIPQETLNQINKASPRRQPRKRAQKRSVGSDE. Residues 244-266 are compositionally biased toward polar residues; that stretch reads GTSSQNDVDMSWIPQETLNQINK. Position 247 is a phosphoserine (Ser-247). At Thr-260 the chain carries Phosphothreonine. Ser-268 is modified (phosphoserine). The segment covering 268 to 279 has biased composition (basic residues); the sequence is SPRRQPRKRAQK.

Belongs to the TRAP-alpha family. Heterotetramer of TRAP-alpha, TRAP-beta, TRAP-delta and TRAP-gamma. Interacts with palmitoylated calnexin (CALX), the interaction is required for efficient folding of glycosylated proteins.

It is found in the endoplasmic reticulum membrane. In terms of biological role, TRAP proteins are part of a complex whose function is to bind calcium to the ER membrane and thereby regulate the retention of ER resident proteins. May be involved in the recycling of the translocation apparatus after completion of the translocation process or may function as a membrane-bound chaperone facilitating folding of translocated proteins. In Mus musculus (Mouse), this protein is Translocon-associated protein subunit alpha (Ssr1).